The following is a 164-amino-acid chain: MNIAICPGSFDPITTGHLDIIRRASKLFDHVVVAVGSNLRKQPRLSAAERARLIEKVTADLENVSVEVMEGLLVDFAREQGARVVVKGLRAVSDFESEFEQAQLNRTLYPELETVFIMSASQHSFLSSSAVREIAALGGDVRGLVPDGILETVRQIYSRSDGKI.

Serine 9 is a binding site for substrate. ATP-binding positions include 9 to 10 (SF) and histidine 17. Substrate contacts are provided by lysine 41, leucine 73, and lysine 87. Residues 88-90 (GLR), glutamate 98, and 123-129 (HSFLSSS) each bind ATP.

The protein belongs to the bacterial CoaD family. Homohexamer. Requires Mg(2+) as cofactor.

It localises to the cytoplasm. The catalysed reaction is (R)-4'-phosphopantetheine + ATP + H(+) = 3'-dephospho-CoA + diphosphate. The protein operates within cofactor biosynthesis; coenzyme A biosynthesis; CoA from (R)-pantothenate: step 4/5. In terms of biological role, reversibly transfers an adenylyl group from ATP to 4'-phosphopantetheine, yielding dephospho-CoA (dPCoA) and pyrophosphate. The sequence is that of Phosphopantetheine adenylyltransferase from Rubrobacter xylanophilus (strain DSM 9941 / JCM 11954 / NBRC 16129 / PRD-1).